A 735-amino-acid polypeptide reads, in one-letter code: Photosystem I P700 chlorophyll a apoprotein A2 (735 aa).

8 helical membrane passes run 47–70, 136–159, 176–200, 274–292, 331–354, 370–396, 418–440, and 518–536; these read IFASHFGQLSIIFLWTSGNLFHVA, LYNGSLFLSILSALFLLAGWLHLQ, LNHHLSGLFGISSLAWTGHLVHVAI, MAHHHLAIAVIFVLAGHMY, LHFQLGLALASVGTICSLVAQHMY, AALYTHHQYIASFIICGAFAHGAIFFI, AIISHLSWVSLFLGFHTLGLYVH, and FLVHHAIALGLHTTTLILV. Positions 560 and 569 each coordinate [4Fe-4S] cluster. Transmembrane regions (helical) follow at residues 576–597 and 644–666; these read AFYLSIFWSLNTVGWVTFYWHW and LSVWAWVFLFGHLIYATGFMFLI. Chlorophyll a contacts are provided by histidine 655, methionine 663, and tyrosine 671. Residue tryptophan 672 participates in phylloquinone binding. Residues 708-728 form a helical membrane-spanning segment; the sequence is LVGLVHFSVGYIFTYAAFLIA.

It belongs to the PsaA/PsaB family. In terms of assembly, the PsaA/B heterodimer binds the P700 chlorophyll special pair and subsequent electron acceptors. PSI consists of a core antenna complex that captures photons, and an electron transfer chain that converts photonic excitation into a charge separation. The eukaryotic PSI reaction center is composed of at least 11 subunits. The cofactor is P700 is a chlorophyll a/chlorophyll a' dimer, A0 is one or more chlorophyll a, A1 is one or both phylloquinones and FX is a shared 4Fe-4S iron-sulfur center..

It localises to the plastid. The protein localises to the chloroplast thylakoid membrane. The catalysed reaction is reduced [plastocyanin] + hnu + oxidized [2Fe-2S]-[ferredoxin] = oxidized [plastocyanin] + reduced [2Fe-2S]-[ferredoxin]. In terms of biological role, psaA and PsaB bind P700, the primary electron donor of photosystem I (PSI), as well as the electron acceptors A0, A1 and FX. PSI is a plastocyanin/cytochrome c6-ferredoxin oxidoreductase, converting photonic excitation into a charge separation, which transfers an electron from the donor P700 chlorophyll pair to the spectroscopically characterized acceptors A0, A1, FX, FA and FB in turn. Oxidized P700 is reduced on the lumenal side of the thylakoid membrane by plastocyanin or cytochrome c6. This chain is Photosystem I P700 chlorophyll a apoprotein A2, found in Stigeoclonium helveticum (Green alga).